A 415-amino-acid polypeptide reads, in one-letter code: Extracellular signal-regulated kinase 1 (415 aa).

The Protein kinase domain occupies 66 to 369 (YQILEIVGEG…VEDALKHPYL (304 aa)). ATP contacts are provided by residues 72 to 80 (VGEGAYGIV) and Lys-95. Residue Asp-190 is the Proton acceptor of the active site. At Thr-226 the chain carries Phosphothreonine. The short motif at 226-228 (TEY) is the TXY element. At Tyr-228 the chain carries Phosphotyrosine.

It belongs to the protein kinase superfamily. CMGC Ser/Thr protein kinase family. MAP kinase subfamily. The cofactor is Mg(2+). In terms of processing, dually phosphorylated on Thr-226 and Tyr-228, which activates the enzyme.

It carries out the reaction L-seryl-[protein] + ATP = O-phospho-L-seryl-[protein] + ADP + H(+). It catalyses the reaction L-threonyl-[protein] + ATP = O-phospho-L-threonyl-[protein] + ADP + H(+). Its activity is regulated as follows. Activated by tyrosine and threonine phosphorylation. In Candida albicans (strain WO-1) (Yeast), this protein is Extracellular signal-regulated kinase 1 (CEK1).